The primary structure comprises 255 residues: Small ribosomal subunit protein uS2 (255 aa).

The segment at 230–255 (QGSSGRDLGASSEVPVEPALEEAAEG) is disordered.

This sequence belongs to the universal ribosomal protein uS2 family.

The sequence is that of Small ribosomal subunit protein uS2 from Rhizobium johnstonii (strain DSM 114642 / LMG 32736 / 3841) (Rhizobium leguminosarum bv. viciae).